A 67-amino-acid polypeptide reads, in one-letter code: MRCFPVFIILLLLIASAPCFDARTKTDDDVPLSPLRDNLKRTIRTRLNIRECCEDGWCCTAAPLTGR.

The N-terminal stretch at 1–19 is a signal peptide; the sequence is MRCFPVFIILLLLIASAPC. The propeptide occupies 20–49; sequence FDARTKTDDDVPLSPLRDNLKRTIRTRLNI. At T65 the chain carries Threonine amide.

This sequence belongs to the conotoxin T superfamily. In terms of processing, contains 2 disulfide bonds that can be either 'C1-C3, C2-C4' or 'C1-C4, C2-C3', since these disulfide connectivities have been observed for conotoxins with cysteine framework V (for examples, see AC P0DQQ7 and AC P81755). Expressed by the venom duct.

The protein resides in the secreted. The protein is Conotoxin LeDr192 of Conus litteratus (Lettered cone).